The following is a 311-amino-acid chain: 4-hydroxy-3-methylbut-2-enyl diphosphate reductase (311 aa).

A [4Fe-4S] cluster-binding site is contributed by Cys12. His41 and His74 together coordinate (2E)-4-hydroxy-3-methylbut-2-enyl diphosphate. Dimethylallyl diphosphate contacts are provided by His41 and His74. His41 and His74 together coordinate isopentenyl diphosphate. Cys96 is a binding site for [4Fe-4S] cluster. His124 lines the (2E)-4-hydroxy-3-methylbut-2-enyl diphosphate pocket. A dimethylallyl diphosphate-binding site is contributed by His124. His124 is an isopentenyl diphosphate binding site. Catalysis depends on Glu126, which acts as the Proton donor. Residue Thr167 coordinates (2E)-4-hydroxy-3-methylbut-2-enyl diphosphate. Cys197 contacts [4Fe-4S] cluster. Ser225, Ser226, Asn227, and Ser269 together coordinate (2E)-4-hydroxy-3-methylbut-2-enyl diphosphate. 4 residues coordinate dimethylallyl diphosphate: Ser225, Ser226, Asn227, and Ser269. Residues Ser225, Ser226, Asn227, and Ser269 each contribute to the isopentenyl diphosphate site.

Belongs to the IspH family. [4Fe-4S] cluster serves as cofactor.

It carries out the reaction isopentenyl diphosphate + 2 oxidized [2Fe-2S]-[ferredoxin] + H2O = (2E)-4-hydroxy-3-methylbut-2-enyl diphosphate + 2 reduced [2Fe-2S]-[ferredoxin] + 2 H(+). The enzyme catalyses dimethylallyl diphosphate + 2 oxidized [2Fe-2S]-[ferredoxin] + H2O = (2E)-4-hydroxy-3-methylbut-2-enyl diphosphate + 2 reduced [2Fe-2S]-[ferredoxin] + 2 H(+). The protein operates within isoprenoid biosynthesis; dimethylallyl diphosphate biosynthesis; dimethylallyl diphosphate from (2E)-4-hydroxy-3-methylbutenyl diphosphate: step 1/1. It participates in isoprenoid biosynthesis; isopentenyl diphosphate biosynthesis via DXP pathway; isopentenyl diphosphate from 1-deoxy-D-xylulose 5-phosphate: step 6/6. Its function is as follows. Catalyzes the conversion of 1-hydroxy-2-methyl-2-(E)-butenyl 4-diphosphate (HMBPP) into a mixture of isopentenyl diphosphate (IPP) and dimethylallyl diphosphate (DMAPP). Acts in the terminal step of the DOXP/MEP pathway for isoprenoid precursor biosynthesis. The polypeptide is 4-hydroxy-3-methylbut-2-enyl diphosphate reductase (Aeromonas salmonicida (strain A449)).